The sequence spans 510 residues: MKLAYWMYAGPAHIGTLRVASSFKNVHSIMHAPLGDDYFNVMRSMLERERDFTPVTTSVVDRQVLARGSDEKVIRNIVRKDGEEQPDLIVVTPTCTSSILQEDLHHFVRQAQLASRCDVVLADVNHYRVNELQAADRTLQQIVEFYITKARKSGELDGLPQKTERPSCNILGISSLGFHNAHDLRELKALLRDLDIDLNLVIPQGASVHDLKHLGRAWFNVVPYRELGPMTARYLQQEFGMPYIEITPMGVVETARFIRQIQQILNEQGIPVDYEAYIQEQTLHISQAAWFSRSIDCQNLTGKKAVVFGDSTHAAAITKILAREMGIHVVWAGSYCTYDGEWFQAEVGEYCDQILMTEDHTRVADAIAQAEPAAIFGTQMERHVGKRLRIPCGVISAPIHVQDFPIGYRPFLGYEGANQIVDLIYNSFTLGMEDHLLEIFGGHDTKEVIHKSLSADSDLIWTREAQAELDKVPGFVRGKVKRNTEKFARERGLTEISVEVMYAAKEAFGA.

Asp-36 provides a ligand contact to [4Fe-4S] cluster. The active-site Proton donor is the Asp-296. 431–432 (GM) lines the substrate pocket.

Belongs to the ChlB/BchB/BchZ family. In terms of assembly, protochlorophyllide reductase is composed of three subunits; ChlL, ChlN and ChlB. Forms a heterotetramer of two ChlB and two ChlN subunits. The cofactor is [4Fe-4S] cluster.

The enzyme catalyses chlorophyllide a + oxidized 2[4Fe-4S]-[ferredoxin] + 2 ADP + 2 phosphate = protochlorophyllide a + reduced 2[4Fe-4S]-[ferredoxin] + 2 ATP + 2 H2O. It participates in porphyrin-containing compound metabolism; chlorophyll biosynthesis (light-independent). Component of the dark-operative protochlorophyllide reductase (DPOR) that uses Mg-ATP and reduced ferredoxin to reduce ring D of protochlorophyllide (Pchlide) to form chlorophyllide a (Chlide). This reaction is light-independent. The NB-protein (ChlN-ChlB) is the catalytic component of the complex. The chain is Light-independent protochlorophyllide reductase subunit B from Synechococcus sp. (strain JA-2-3B'a(2-13)) (Cyanobacteria bacterium Yellowstone B-Prime).